Reading from the N-terminus, the 384-residue chain is 2-deoxy-scyllo-inosose synthase (384 aa).

Residues Asp42, 73–76, 105–109, 129–130, 140–142, and 151–152 contribute to the NAD(+) site; these read EVHK, GITGN, TT, SLK, and KN. Residue Lys142 is part of the active site. A Co(2+)-binding site is contributed by Glu184. Residue Glu244 is part of the active site. 2 residues coordinate Co(2+): His247 and His263.

Belongs to the sugar phosphate cyclases superfamily. DOI synthase family. Requires NAD(+) as cofactor. The cofactor is Co(2+).

It catalyses the reaction D-glucose 6-phosphate = 2-deoxy-L-scyllo-inosose + phosphate. It participates in metabolic intermediate biosynthesis; 2-deoxystreptamine biosynthesis; 2-deoxystreptamine from D-glucose 6-phosphate: step 1/4. Its pathway is antibiotic biosynthesis; lividomycin biosynthesis. Catalyzes the intramolecular carbocycle formation from D-glucose-6-phosphate to 2-deoxy-scyllo-inosose (DOI). This Streptomyces lividus protein is 2-deoxy-scyllo-inosose synthase (livC).